Consider the following 281-residue polypeptide: MTDTPETLSGTECNGDRPPENGQQPSSQTRQETTDADETQAYYKVEPSLEDLPAKENQEETGNTKGNILPKGPEDEKILNENPEENLFVVHQAIKDLSLQEISAEDMAFREGHPWKKIPPNSSNLEVSRQKERTAQQQLEQRGDASTTEIEWLGFQKSRPVDILHSKCDEEEEEEEEVWNEEINEEDVDECAEEEDEVRVIEFKRKHREGSPLKEESLAREDSPLGSPGSQPGTPDEQPVFGKKGDIARNSYSRYNTISYRKIRKGNTKQRIDEFESMMHL.

Composition is skewed to polar residues over residues 1 to 12, 21 to 31, and 135 to 147; these read MTDTPETLSGTE, NGQQPSSQTRQ, and AQQQ…DAST. 3 disordered regions span residues 1-80, 110-147, and 167-248; these read MTDT…KILN, REGH…DAST, and KCDE…GDIA. A compositionally biased stretch (acidic residues) spans 169-197; sequence DEEEEEEEEVWNEEINEEDVDECAEEEDE. Over residues 198 to 223 the composition is skewed to basic and acidic residues; that stretch reads VRVIEFKRKHREGSPLKEESLAREDS. 4 positions are modified to phosphoserine: S211, S223, S227, and S230. A Phosphothreonine modification is found at T234. The tract at residues 262-281 is binds actin; sequence KIRKGNTKQRIDEFESMMHL.

In terms of assembly, binds actin. In terms of tissue distribution, brain and spinal cord. Exclusively expressed by the oligodendrocytes. Appears at a late stage during myelination, and in the mature nerves, it is localized to the outer cytoplasmic lip of the myelin sheath and the paranodal loops.

It is found in the cytoplasm. It localises to the cytoskeleton. In terms of biological role, plays a role in cytoskeletal rearrangements during the late wrapping and/or compaction phases of myelinogenesis as well as in maintenance and stability of myelin sheath in the adult. May play an important role in late-stage oligodendroglia maturation, myelin/Ranvier node formation during CNS development, and in the maintenance and plasticity of related structures in the mature CNS. This Mus musculus (Mouse) protein is Ermin (Ermn).